A 566-amino-acid chain; its full sequence is Liver carboxylesterase (566 aa).

The signal sequence occupies residues 1–18 (MWLLPLVLTSLASSATWA). Asparagine 80 carries an N-linked (GlcNAc...) asparagine glycan. Cysteine 88 and cysteine 117 are disulfide-bonded. The Acyl-ester intermediate role is filled by serine 222. The cysteines at positions 274 and 285 are disulfide-linked. The active-site Charge relay system is the glutamate 354. Serine 379 is subject to Phosphoserine. Histidine 467 serves as the catalytic Charge relay system. A Prevents secretion from ER motif is present at residues 563–566 (HAEL).

This sequence belongs to the type-B carboxylesterase/lipase family.

It is found in the endoplasmic reticulum lumen. The catalysed reaction is a carboxylic ester + H2O = an alcohol + a carboxylate + H(+). Its activity is regulated as follows. Activated by CHAPS at concentrations of up to 130 mM, higher concentrations reduce activity. In the presence of CHAPS, activity is stimulated by non-ionic detergents. Inhibited by the esterase inhibitors diisopropylfluorophosphate and phenylmethylsulfonyl fluoride. Involved in the detoxification of xenobiotics and in the activation of ester and amide prodrugs. Active towards triacylglycerides containing short-chain fatty acids from C2 to C6, and 1(3)-monoacylglycerols containing fatty acids from C2 to C12. Inactive on long-chain triacylglycerols and diacylglycerol. Hydrolyzes aromatic and alkyl esters and vitamin A acetate. The hydrolysis rate depends upon the amino acid promoiety and the esterification site of the prodrug. Aromatic promoieties are favored, highest rates are observed with phenylalanyl progdrugs, hydrolysis of valyl and isoleucyl prodrugs is less efficient. With floxuridine prodrugs, activity is higher on 5' monoesters than on 3' monoesters. With gemcitabine prodrugs, activity is higher on 3' monoesters than on 5' monoesters. The polypeptide is Liver carboxylesterase (Sus scrofa (Pig)).